The sequence spans 426 residues: Phosphomethylpyrimidine synthase (426 aa).

Substrate is bound by residues Asn-65, Met-94, Tyr-123, His-162, 184-186, 225-228, and Glu-264; these read SRG and DGMR. Position 268 (His-268) interacts with Zn(2+). A substrate-binding site is contributed by Tyr-291. A Zn(2+)-binding site is contributed by His-332. [4Fe-4S] cluster-binding residues include Cys-408, Cys-411, and Cys-415.

The protein belongs to the ThiC family. Requires [4Fe-4S] cluster as cofactor.

It catalyses the reaction 5-amino-1-(5-phospho-beta-D-ribosyl)imidazole + S-adenosyl-L-methionine = 4-amino-2-methyl-5-(phosphooxymethyl)pyrimidine + CO + 5'-deoxyadenosine + formate + L-methionine + 3 H(+). The protein operates within cofactor biosynthesis; thiamine diphosphate biosynthesis. Catalyzes the synthesis of the hydroxymethylpyrimidine phosphate (HMP-P) moiety of thiamine from aminoimidazole ribotide (AIR) in a radical S-adenosyl-L-methionine (SAM)-dependent reaction. The sequence is that of Phosphomethylpyrimidine synthase from Methanococcus maripaludis (strain C6 / ATCC BAA-1332).